Here is a 108-residue protein sequence, read N- to C-terminus: DNA-directed RNA polymerase III subunit RPC10 (108 aa).

6 residues coordinate Zn(2+): cysteine 5, cysteine 8, cysteine 25, cysteine 28, cysteine 69, and cysteine 72. A C4-type zinc finger spans residues cysteine 5 to cysteine 28. The TFIIS-type zinc-finger motif lies at threonine 65 to arginine 107. Residues aspartate 88 to glutamate 89 carry the Hairpin motif. Zn(2+) contacts are provided by cysteine 98 and cysteine 102.

The protein belongs to the archaeal RpoM/eukaryotic RPA12/RPB9/RPC11 RNA polymerase family. In terms of assembly, component of the RNA polymerase III complex consisting of 17 subunits: a ten-subunit horseshoe-shaped catalytic core composed of POLR3A/RPC1, POLR3B/RPC2, POLR1C/RPAC1, POLR1D/RPAC2, POLR3K/RPC10, POLR2E/RPABC1, POLR2F/RPABC2, POLR2H/RPABC3, POLR2K/RPABC4 and POLR2L/RPABC5; a mobile stalk composed of two subunits POLR3H/RPC8 and CRCP/RPC9, protruding from the core and functioning primarily in transcription initiation; and additional subunits homologous to general transcription factors of the RNA polymerase II machinery, POLR3C/RPC3-POLR3F/RPC6-POLR3G/RPC7 heterotrimer required for transcription initiation and POLR3D/RPC4-POLR3E/RPC5 heterodimer involved in both transcription initiation and termination.

Its subcellular location is the nucleus. Its function is as follows. Core component of RNA polymerase III (Pol III) which synthesizes small non-coding RNAs using the four ribonucleoside triphosphates as substrates. Can mediate Pol I proofreading of the nascent RNA transcript. Anchors into the Pol III active site to constantly monitor transcription fidelity, cleaves mis-incorporated 5'-ribonucleotides and restarts the transcription process. Once Pol III reaches the poly(dT) termination signal, can induce Pol III clamp opening and transcription termination. Pol III plays an important role in sensing and limiting infection by intracellular bacteria and DNA viruses. Acts as a nuclear and cytosolic DNA sensor involved in innate immune response. Can sense non-self dsDNA that serves as template for transcription into dsRNA. The non-self RNA polymerase III transcripts, such as Epstein-Barr virus-encoded RNAs (EBERs) induce type I interferon and NF-kappa-B through the RIG-I pathway. The polypeptide is DNA-directed RNA polymerase III subunit RPC10 (POLR3K) (Bos taurus (Bovine)).